We begin with the raw amino-acid sequence, 336 residues long: Octanoyltransferase (336 aa).

Positions 1-16 are enriched in polar residues; that stretch reads MPKSALMSSSFQTSVS. 2 disordered regions span residues 1–22 and 48–88; these read MPKS…PLPV and QGKG…GGGR. The tract at residues 1–92 is unknown; sequence MPKSALMSSS…AAGGGRTIRD (92 aa). The lipB domain stretch occupies residues 93–336; sequence VKEAAFDVLD…GQEALSVASP (244 aa). The BPL/LPL catalytic domain maps to 124–318; the sequence is VGGRPTLLLV…AFALTFADYD (195 aa). Substrate-binding positions include 170 to 177, 244 to 246, and 257 to 259; these read RGGDVTYH, SIG, and GIG. Cys275 (acyl-thioester intermediate) is an active-site residue.

The protein in the C-terminal section; belongs to the LipB family.

It is found in the cytoplasm. It catalyses the reaction octanoyl-[ACP] + L-lysyl-[protein] = N(6)-octanoyl-L-lysyl-[protein] + holo-[ACP] + H(+). It functions in the pathway protein modification; protein lipoylation via endogenous pathway; protein N(6)-(lipoyl)lysine from octanoyl-[acyl-carrier-protein]: step 1/2. In terms of biological role, catalyzes the transfer of endogenously produced octanoic acid from octanoyl-acyl-carrier-protein onto the lipoyl domains of lipoate-dependent enzymes. Lipoyl-ACP can also act as a substrate although octanoyl-ACP is likely to be the physiological substrate. The polypeptide is Octanoyltransferase (Deinococcus radiodurans (strain ATCC 13939 / DSM 20539 / JCM 16871 / CCUG 27074 / LMG 4051 / NBRC 15346 / NCIMB 9279 / VKM B-1422 / R1)).